Reading from the N-terminus, the 1442-residue chain is MQFLSPQMEQKLHRATIHQITVSKTGDMPIRFRLRHLNYRNNKKQKNGKDKETTPPPTTTGAKEPLVNGHSAAVNGMNGHTSEGEQQKDKTAAEDKKKPDSDVMEIIQDTGFTVQILSPGVEPLSIQVSSMELVQEIHQLLMDREDTCHRTCFSLQLDGVTLDNFAELKNIEGLKEGSIIKVVEEPYTMREARIHVRHVRDLLKSMDPADAYNGVDCSSLTFLHTITQGDILEKKKGRSESVDCTPPEHIMPGAKDRPLLPLQPGVGKKGPQPLKVLTTSAWNPPPGPRKLHGDLMYLYVVTMEDKRFHISACPRGFFINQSSDDVFDPRPDNPSYLCHSLIDLLSQISPTFRRCFAQMQKKRTQRHPFERVATPYQVYTWSAPALEHTIDAIRAEDTFSSKLGYEEHIPGQTRDWNEELQTTRELPRETLPERLLRERAIFKVHSDFVTAATRGAMAVIDGNVMAINPGEDAKMQMFIWNNIFFSLGFDVRDHYKELGGDAAAFVAPRNDLHGVRVYSAVDVEGLYTLGTVVIDYRGYRVTAQSIIPGILEREQEQSVVYGSIDFGKTVLSHEKYLELLNNAGKHLKILPHSVLNEKEEEIELCSSVECKGIIGNDGRHYILDLLRTFPPDVNFLKLDEELSKDCKALGFPIEHKHKLSCLRQELLEAFVESRYLMFIKHAAFQLQQLNSAKLKQKQEAKDSKDSEKKEEPKAIEAAPVAKEPAKKDAAESNNNVESKEECPKKGSTDKAKDKSAGVPKVETEEAKKLMESLLSSDEKNESKEVVKRACEAVGSLKEYEFDIRFNPDVYSPGIKHVDNQSAANSLKKQKQLVKDAAEFLVKHQIPSFVHDCLDHTAAPMDGTTLTETLHSRGINVRYLGKVANLLAKIKQLEYLHTIAVSELIIRAAKHIFTSYMQNTEMMSMAAAISHFLNCFLTATTAVSHSGSLSESDALTKSGSSGGKQQRRQNKRSAGSKGGKPSFQCTQDNNEWQLLTPKSLWSQIEKELKSYWDYELLPAGAHDSADPVVSHYRLQKISLLRAFCLKTGVQILLREYNFEMKNKPTFGESDIVNVFPVVKHINPRASDAYNFYTTGQSKIQQGYFKDGYDLISEALNLLNNVYGAMHPENAQCLRMLARLSYIMGDPQEALAIQQRAVLMSERVNGIDHPYTIAEYAPLALYCFANSQISTALKLLYRARYLATIVCGENHPDIALLDSNISLILHAVGEYELSLRFLEHALALNIKYYGEKSLKVAVSYHLVARTQSCMGDFRSALNNEKETYAIYKQQLGETHEKTQESSECLRHLTQQAVVLQKKMNDIYSNGKLTSGLPPIHIQPPSMGSVLDMLNAINGIIFVQISSKEIANLKNEIEKRQKEGGTSEQAAAAQASQEEVDRMLTETMAKTAAGIPFEDHDKHELPVAAEASSSKQADNSSNASAQQVS.

2 disordered regions span residues 38–100 and 237–258; these read NYRN…KKPD and GRSE…KDRP. Basic and acidic residues predominate over residues 82–100; sequence SEGEQQKDKTAAEDKKKPD. The Clu domain maps to 394–636; it reads RAEDTFSSKL…RTFPPDVNFL (243 aa). Basic and acidic residues-rich tracts occupy residues 696 to 714 and 737 to 763; these read QKQE…EPKA and ESKE…KVET. Disordered stretches follow at residues 696–763 and 949–984; these read QKQE…KVET and SESD…SFQC. Polar residues predominate over residues 949–958; it reads SESDALTKSG. TPR repeat units lie at residues 1087–1120, 1213–1246, and 1248–1281; these read AYNF…LNNV, ALLD…NIKY, and GEKS…EKET. The interval 1373–1442 is disordered; the sequence is RQKEGGTSEQ…SSNASAQQVS (70 aa). Residues 1380-1390 are compositionally biased toward low complexity; the sequence is SEQAAAAQASQ. The segment covering 1424 to 1442 has biased composition (polar residues); the sequence is ASSSKQADNSSNASAQQVS.

It belongs to the CLU family.

The protein resides in the cytoplasm. Its function is as follows. mRNA-binding protein involved in proper cytoplasmic distribution of mitochondria. In Aedes aegypti (Yellowfever mosquito), this protein is Clustered mitochondria protein homolog.